We begin with the raw amino-acid sequence, 76 residues long: uORF2 protein (76 aa).

Its function is as follows. Plays a role in viral replication. This Zika virus (isolate ZIKV/Human/French Polynesia/10087PF/2013) (ZIKV) protein is uORF2 protein.